A 587-amino-acid chain; its full sequence is 2-succinyl-5-enolpyruvyl-6-hydroxy-3-cyclohexene-1-carboxylate synthase (587 aa).

Belongs to the TPP enzyme family. MenD subfamily. In terms of assembly, homodimer. Mg(2+) serves as cofactor. Requires Mn(2+) as cofactor. The cofactor is thiamine diphosphate.

It carries out the reaction isochorismate + 2-oxoglutarate + H(+) = 5-enolpyruvoyl-6-hydroxy-2-succinyl-cyclohex-3-ene-1-carboxylate + CO2. Its pathway is quinol/quinone metabolism; 1,4-dihydroxy-2-naphthoate biosynthesis; 1,4-dihydroxy-2-naphthoate from chorismate: step 2/7. The protein operates within quinol/quinone metabolism; menaquinone biosynthesis. Functionally, catalyzes the thiamine diphosphate-dependent decarboxylation of 2-oxoglutarate and the subsequent addition of the resulting succinic semialdehyde-thiamine pyrophosphate anion to isochorismate to yield 2-succinyl-5-enolpyruvyl-6-hydroxy-3-cyclohexene-1-carboxylate (SEPHCHC). The protein is 2-succinyl-5-enolpyruvyl-6-hydroxy-3-cyclohexene-1-carboxylate synthase of Chloroflexus aurantiacus (strain ATCC 29366 / DSM 635 / J-10-fl).